Consider the following 513-residue polypeptide: GMP synthase [glutamine-hydrolyzing] (513 aa).

Residues 9–198 (LILVLDFGSQ…VRRVCDCKGQ (190 aa)) form the Glutamine amidotransferase type-1 domain. Cysteine 86 (nucleophile) is an active-site residue. Catalysis depends on residues histidine 172 and glutamate 174. Residues 199 to 388 (WTMENFIEIE…LGIPEHLVWR (190 aa)) enclose the GMPS ATP-PPase domain. 226 to 232 (SGGVDSS) is a binding site for ATP.

In terms of assembly, homodimer.

It carries out the reaction XMP + L-glutamine + ATP + H2O = GMP + L-glutamate + AMP + diphosphate + 2 H(+). The protein operates within purine metabolism; GMP biosynthesis; GMP from XMP (L-Gln route): step 1/1. In terms of biological role, catalyzes the synthesis of GMP from XMP. In Staphylococcus aureus (strain Mu3 / ATCC 700698), this protein is GMP synthase [glutamine-hydrolyzing].